Reading from the N-terminus, the 124-residue chain is RNA polymerase-binding protein RbpA (124 aa).

C34, H38, C56, and C59 together coordinate Zn(2+). The interval 73–124 is sufficient for interaction with HrdB (SigA); the sequence is EKKAKPARTHWDMLMERRTREELEEVLEERLAVLRSGAMNIAVHPRDSRKSA.

Belongs to the RNA polymerase-binding protein RbpA family. Homodimer. Forms a complex with the RNAP, and a complex with RNAP plus principal sigma factor HrdB associated with promoter. Binds to free principal sigma factors HrdB and HrdA, probably via the sigma-2 domain, but not to 6 other sigma factors tested. It depends on Zn(2+) as a cofactor.

In terms of biological role, binds to RNA polymerase (RNAP), stimulating transcription from principal, but not alternative sigma factor promoters. Stimulates transcription from several principal sigma factor HrdB (SigA)-dependent promoters but not from a SigR-dependent promoter. Stimulation occurs in the presence of the transcription initiation inhibitor rifampicin (Rif). The sequence is that of RNA polymerase-binding protein RbpA from Streptomyces coelicolor (strain ATCC BAA-471 / A3(2) / M145).